Here is a 235-residue protein sequence, read N- to C-terminus: Sugar fermentation stimulation protein homolog (235 aa).

This sequence belongs to the SfsA family.

The sequence is that of Sugar fermentation stimulation protein homolog from Ectopseudomonas mendocina (strain ymp) (Pseudomonas mendocina).